A 304-amino-acid chain; its full sequence is UDP-N-acetylenolpyruvoylglucosamine reductase (304 aa).

Residues 33–198 (IGGPADLLVM…LEVVLALQEG (166 aa)) form the FAD-binding PCMH-type domain. R177 is an active-site residue. The Proton donor role is filled by S227. The active site involves E297.

The protein belongs to the MurB family. The cofactor is FAD.

It is found in the cytoplasm. The enzyme catalyses UDP-N-acetyl-alpha-D-muramate + NADP(+) = UDP-N-acetyl-3-O-(1-carboxyvinyl)-alpha-D-glucosamine + NADPH + H(+). It functions in the pathway cell wall biogenesis; peptidoglycan biosynthesis. In terms of biological role, cell wall formation. The sequence is that of UDP-N-acetylenolpyruvoylglucosamine reductase from Alkaliphilus metalliredigens (strain QYMF).